The sequence spans 362 residues: uncharacterized protein (362 aa).

7 helical membrane-spanning segments follow: residues 32–52, 75–95, 106–126, 148–168, 176–196, 287–307, and 329–349; these read GAGW…VGAV, FVDA…ADGV, VVML…DLSV, AAVG…GVGA, GVGT…VVVV, VFAL…PVAM, and VLVA…CGMF.

The protein belongs to the peptidase S58 family.

It is found in the cell membrane. Functionally, aminopeptidase. This is an uncharacterized protein from Mycobacterium leprae (strain TN).